The following is an 888-amino-acid chain: uncharacterized protein (888 aa).

Residues 1-20 (MKILKSLVLLVLFIVMPAKA) form the signal peptide. 6 helical membrane passes run 513-533 (IVKAALTLYVIIFGLMFVAGA), 565-585 (TYFFSVFTDGINFFITNVVGA), 611-631 (LLFIELLQIHNGLAFIAIITI), 649-669 (VIAFIGITVMISLAPFFIILM), 682-702 (ISTLLSYVVQPTILLIFFLLI), and 781-801 (LLFYSYCLMSYGLVTFVNIVV).

This sequence belongs to the TrbL/VirB6 family.

The protein resides in the cell membrane. This is an uncharacterized protein from Rickettsia prowazekii (strain Madrid E).